Reading from the N-terminus, the 3135-residue chain is Beauvericin nonribosomal cyclodepsipeptide synthetase BEA1 (3135 aa).

Residues 70–458 are condensation 1; that stretch reads HVAYEISNDI…QRLRGSPDKL (389 aa). The tract at residues 196-228 is disordered; sequence LSNRPYTPESSDPEDDGLSLTPTDGSKTPETEG. The tract at residues 499–896 is adenylation 1; that stretch reads SLSPSKVAIC…GRMDSQVKIR (398 aa). The Carrier 1 domain maps to 1021 to 1097; it reads STTTSSQSKL…GLEAIVNGSA (77 aa). Position 1058 is an O-(pantetheine 4'-phosphoryl)serine (Ser-1058). Residues 1115 to 1542 are condensation 2; sequence SYSQGRLWFL…NIPISVLPLT (428 aa). Residues 1571–1974 are adenylation 2; sequence FRTQVAAYPD…GRMDTQFKIR (404 aa). Positions 2042–2182 are S-adenosyl-L-methionine-dependent N-methyltransferase; the sequence is MYADIGDIDP…FPSPEYLAQV (141 aa). 2 Carrier domains span residues 2509–2583 and 2603–2677; these read VPIS…REGL and APRT…ESTD. Ser-2543 and Ser-2637 each carry O-(pantetheine 4'-phosphoryl)serine. A condensation 3 region spans residues 2721-3127; the sequence is QDMYQSTQMQ…QYFLEEVCNT (407 aa).

Belongs to the NRP synthetase family.

It carries out the reaction 3 (R)-2-hydroxy-3-methylbutanoate + 3 L-phenylalanine + 3 S-adenosyl-L-methionine + 6 ATP = beauvericin + 6 AMP + 3 S-adenosyl-L-homocysteine + 6 diphosphate + 6 H(+). Functionally, beauvericin nonribosomal cyclodepsipeptide synthetase; part of the gene cluster that mediates the biosynthesis of beauvericin (BEA), a non-ribosomal cyclic hexadepsipeptide that shows antibiotic, antifungal, insecticidal, and cancer cell antiproliferative and antihaptotactic activity. Ketoisovalerate reductase BEA2 catalyzes the NADPH-specific reduction of ketoisovaleric acid to hydroxyisovalerate, a precursor for beauvericin biosynthesis. The nonribosomal cyclodepsipeptide synthetase BEA1 then catalyzes the formation of beauvericin via condensation and cyclization of 3 dipeptidol monomers, each composed of one unit of hydroxyisovalerate and one unit of N-methyl-phenylalanine. The protein is Beauvericin nonribosomal cyclodepsipeptide synthetase BEA1 of Gibberella fujikuroi (strain CBS 195.34 / IMI 58289 / NRRL A-6831) (Bakanae and foot rot disease fungus).